The chain runs to 54 residues: Ovomucoid (54 aa).

The region spanning 4–54 (VDCSEYPKPVCSLEYMPLCGSDSQTYSNECNFCNAVVDSNGTLTLSHFGKC) is the Kazal-like domain. Cystine bridges form between Cys-6-Cys-36, Cys-14-Cys-33, and Cys-22-Cys-54. N-linked (GlcNAc...) asparagine glycosylation occurs at Asn-43.

The protein resides in the secreted. The sequence is that of Ovomucoid from Caracara plancus (Southern caracara).